The primary structure comprises 615 residues: 1-deoxy-D-xylulose-5-phosphate synthase (615 aa).

Thiamine diphosphate contacts are provided by residues His-72 and 111 to 113; that span reads GHS. Residue Asp-142 participates in Mg(2+) binding. Residues 143–144, Asn-171, Tyr-278, and Glu-360 each bind thiamine diphosphate; that span reads GA. Residue Asn-171 coordinates Mg(2+).

The protein belongs to the transketolase family. DXPS subfamily. As to quaternary structure, homodimer. It depends on Mg(2+) as a cofactor. The cofactor is thiamine diphosphate.

It catalyses the reaction D-glyceraldehyde 3-phosphate + pyruvate + H(+) = 1-deoxy-D-xylulose 5-phosphate + CO2. It participates in metabolic intermediate biosynthesis; 1-deoxy-D-xylulose 5-phosphate biosynthesis; 1-deoxy-D-xylulose 5-phosphate from D-glyceraldehyde 3-phosphate and pyruvate: step 1/1. Catalyzes the acyloin condensation reaction between C atoms 2 and 3 of pyruvate and glyceraldehyde 3-phosphate to yield 1-deoxy-D-xylulose-5-phosphate (DXP). This is 1-deoxy-D-xylulose-5-phosphate synthase from Campylobacter jejuni (strain RM1221).